Consider the following 431-residue polypeptide: Levansucrase LscB (431 aa).

Residues Trp-61, Asp-62, Ala-148, Arg-218, and Asp-219 each coordinate sucrose. Asp-62 (nucleophile) is an active-site residue. Catalysis depends on Glu-303, which acts as the Proton donor/acceptor.

The protein belongs to the glycosyl hydrolase 68 family.

Its subcellular location is the secreted. The enzyme catalyses [6)-beta-D-fructofuranosyl-(2-&gt;](n) alpha-D-glucopyranoside + sucrose = [6)-beta-D-fructofuranosyl-(2-&gt;](n+1) alpha-D-glucopyranoside + D-glucose. Catalyzes the synthesis of levan, a fructose polymer, by transferring the fructosyl moiety from sucrose to a growing acceptor molecule. In Pseudomonas savastanoi pv. glycinea (Pseudomonas syringae pv. glycinea), this protein is Levansucrase LscB.